A 153-amino-acid chain; its full sequence is Aspartate carbamoyltransferase regulatory chain (153 aa).

Zn(2+)-binding residues include C109, C114, C138, and C141.

It belongs to the PyrI family. Contains catalytic and regulatory chains. Zn(2+) serves as cofactor.

Functionally, involved in allosteric regulation of aspartate carbamoyltransferase. The polypeptide is Aspartate carbamoyltransferase regulatory chain (Edwardsiella ictaluri (strain 93-146)).